The sequence spans 105 residues: D-galactoside-specific lectin (105 aa).

The SUEL-type lectin domain maps to 13–103 (VCEDSSLTIS…KYLAVTYICS (91 aa)).

In terms of assembly, homodimer; disulfide-linked.

The protein localises to the cytoplasm. In terms of biological role, this protein binds D-galactoside. May have an important role in the activation of eggs (triggered by fertilization), or in their subsequent differentiation. The dimeric form is essential for hemagglutination activity. The chain is D-galactoside-specific lectin from Heliocidaris crassispina (Sea urchin).